The chain runs to 516 residues: Poly(U)-binding-splicing factor PUF60-B (516 aa).

RRM domains follow at residues 86-164 (CRVY…RPGS) and 183-261 (NRIY…KAVT). Positions 356–398 (TAPASMGTPTSAVQLHTEVKREEDSRRTAEDHSAPVGNGQDSE) are disordered. Basic and acidic residues predominate over residues 372-388 (TEVKREEDSRRTAEDHS). The RRM 3; atypical domain occupies 419 to 506 (TVMVLRNMVG…RKVVAELYDQ (88 aa)).

The protein belongs to the RRM half pint family.

It is found in the nucleus. DNA- and RNA-binding protein, involved in transcription repression and pre-mRNA splicing. This Danio rerio (Zebrafish) protein is Poly(U)-binding-splicing factor PUF60-B (puf60b).